Reading from the N-terminus, the 144-residue chain is uncharacterized protein (144 aa).

Residues 124–133 are compositionally biased toward basic residues; the sequence is KALNRKKSKT. The tract at residues 124–144 is disordered; the sequence is KALNRKKSKTKNGEKNGEGKS. Over residues 134 to 144 the composition is skewed to basic and acidic residues; that stretch reads KNGEKNGEGKS.

This is an uncharacterized protein from Acidianus filamentous virus 1 (isolate United States/Yellowstone) (AFV-1).